Consider the following 416-residue polypeptide: MLEQMGIAAKAASYKLALLSSCEKNRVLEKIADELEAQMESILSANVQDVEQARANGLSEAMLDRLALTPARLKAIADDVRQVCNLADPVGQVIDGGLLDSGLRLERRRVPLGVVGVIYEARPNVTVDVASLCLKTGNAVILRGGKETHRTNAATVRVIQKALKACGLPEAAVQAIDNPDRSLVNEMLRMDKYIDMLIPRGGAGLHKLCREQSTIPVITGGIGVCHIFVDSSADIAPALKIIVNAKTQRPSTCNTVETLLVHQDIAERFLPVLSKQMAESGVTLHGDETVMQALHGPAKLVPLKPEELDNEFLSLDLNVVVVENMDGAIAHIREHGTQHSDAILTSDMHNAARFVNEVDSAAVYVNASTRFTDGGQFGLGAEVAVSTQKLHARGPMGLEALTTYKWIGFGDGTIRA.

The protein belongs to the gamma-glutamyl phosphate reductase family.

It is found in the cytoplasm. The catalysed reaction is L-glutamate 5-semialdehyde + phosphate + NADP(+) = L-glutamyl 5-phosphate + NADPH + H(+). It participates in amino-acid biosynthesis; L-proline biosynthesis; L-glutamate 5-semialdehyde from L-glutamate: step 2/2. In terms of biological role, catalyzes the NADPH-dependent reduction of L-glutamate 5-phosphate into L-glutamate 5-semialdehyde and phosphate. The product spontaneously undergoes cyclization to form 1-pyrroline-5-carboxylate. The sequence is that of Gamma-glutamyl phosphate reductase from Salmonella schwarzengrund (strain CVM19633).